A 136-amino-acid chain; its full sequence is Large ribosomal subunit protein eL27 (136 aa).

The 32-residue stretch at 5–36 folds into the KOW domain; sequence MKPGKVVLVLRGKYAGRKAVVVKQQDEGVSDR.

This sequence belongs to the eukaryotic ribosomal protein eL27 family. As to quaternary structure, component of the large ribosomal subunit.

It is found in the cytoplasm. Its subcellular location is the cytosol. It localises to the rough endoplasmic reticulum. Component of the large ribosomal subunit. The protein is Large ribosomal subunit protein eL27 (rpl-27) of Caenorhabditis elegans.